Here is a 172-residue protein sequence, read N- to C-terminus: Adrenodoxin-like protein 1, mitochondrial (172 aa).

Positions 57-159 constitute a 2Fe-2S ferredoxin-type domain; it reads VNITYVDKDG…GMELELPKAT (103 aa). The [2Fe-2S] cluster site is built by C94, C100, C103, and C140.

It belongs to the adrenodoxin/putidaredoxin family. [2Fe-2S] cluster serves as cofactor.

It is found in the mitochondrion matrix. In terms of biological role, required for ecdysteroidogenesis in the prothoracic gland which is necessary for larval to pupal transition. The chain is Adrenodoxin-like protein 1, mitochondrial from Drosophila melanogaster (Fruit fly).